We begin with the raw amino-acid sequence, 269 residues long: Imidazole glycerol phosphate synthase subunit HisF (269 aa).

Catalysis depends on residues aspartate 23 and aspartate 142.

It belongs to the HisA/HisF family. As to quaternary structure, heterodimer of HisH and HisF.

Its subcellular location is the cytoplasm. The enzyme catalyses 5-[(5-phospho-1-deoxy-D-ribulos-1-ylimino)methylamino]-1-(5-phospho-beta-D-ribosyl)imidazole-4-carboxamide + L-glutamine = D-erythro-1-(imidazol-4-yl)glycerol 3-phosphate + 5-amino-1-(5-phospho-beta-D-ribosyl)imidazole-4-carboxamide + L-glutamate + H(+). It functions in the pathway amino-acid biosynthesis; L-histidine biosynthesis; L-histidine from 5-phospho-alpha-D-ribose 1-diphosphate: step 5/9. Functionally, IGPS catalyzes the conversion of PRFAR and glutamine to IGP, AICAR and glutamate. The HisF subunit catalyzes the cyclization activity that produces IGP and AICAR from PRFAR using the ammonia provided by the HisH subunit. This chain is Imidazole glycerol phosphate synthase subunit HisF, found in Bordetella parapertussis (strain 12822 / ATCC BAA-587 / NCTC 13253).